We begin with the raw amino-acid sequence, 593 residues long: NADH-quinone oxidoreductase subunit C/D (593 aa).

An NADH dehydrogenase I subunit C region spans residues methionine 1–glutamine 184. Residues aspartate 208–arginine 593 form an NADH dehydrogenase I subunit D region.

This sequence in the N-terminal section; belongs to the complex I 30 kDa subunit family. It in the C-terminal section; belongs to the complex I 49 kDa subunit family. As to quaternary structure, NDH-1 is composed of 13 different subunits. Subunits NuoB, CD, E, F, and G constitute the peripheral sector of the complex.

The protein resides in the cell inner membrane. It catalyses the reaction a quinone + NADH + 5 H(+)(in) = a quinol + NAD(+) + 4 H(+)(out). Functionally, NDH-1 shuttles electrons from NADH, via FMN and iron-sulfur (Fe-S) centers, to quinones in the respiratory chain. The immediate electron acceptor for the enzyme in this species is believed to be ubiquinone. Couples the redox reaction to proton translocation (for every two electrons transferred, four hydrogen ions are translocated across the cytoplasmic membrane), and thus conserves the redox energy in a proton gradient. This Pseudomonas putida (strain GB-1) protein is NADH-quinone oxidoreductase subunit C/D.